We begin with the raw amino-acid sequence, 249 residues long: NADH-quinone oxidoreductase subunit C (249 aa).

The protein belongs to the complex I 30 kDa subunit family. As to quaternary structure, NDH-1 is composed of 14 different subunits. Subunits NuoB, C, D, E, F, and G constitute the peripheral sector of the complex.

The protein resides in the cell inner membrane. The enzyme catalyses a quinone + NADH + 5 H(+)(in) = a quinol + NAD(+) + 4 H(+)(out). Functionally, NDH-1 shuttles electrons from NADH, via FMN and iron-sulfur (Fe-S) centers, to quinones in the respiratory chain. The immediate electron acceptor for the enzyme in this species is believed to be ubiquinone. Couples the redox reaction to proton translocation (for every two electrons transferred, four hydrogen ions are translocated across the cytoplasmic membrane), and thus conserves the redox energy in a proton gradient. The polypeptide is NADH-quinone oxidoreductase subunit C (Stenotrophomonas maltophilia (strain R551-3)).